The sequence spans 211 residues: Protein-L-isoaspartate O-methyltransferase 2 (211 aa).

Residue Ser-60 is part of the active site.

Belongs to the methyltransferase superfamily. L-isoaspartyl/D-aspartyl protein methyltransferase family.

The protein localises to the cytoplasm. It catalyses the reaction [protein]-L-isoaspartate + S-adenosyl-L-methionine = [protein]-L-isoaspartate alpha-methyl ester + S-adenosyl-L-homocysteine. In terms of biological role, catalyzes the methyl esterification of L-isoaspartyl residues in peptides and proteins that result from spontaneous decomposition of normal L-aspartyl and L-asparaginyl residues. It plays a role in the repair and/or degradation of damaged proteins. In Nitrosospira multiformis (strain ATCC 25196 / NCIMB 11849 / C 71), this protein is Protein-L-isoaspartate O-methyltransferase 2.